Reading from the N-terminus, the 340-residue chain is Pseudaminic acid synthase (340 aa).

Residues Ser281–Glu337 enclose the AFP-like domain.

Belongs to the pseudaminic acid synthase family. A divalent metal cation serves as cofactor.

The enzyme catalyses 2,4-diacetamido-2,4,6-trideoxy-beta-L-altrose + phosphoenolpyruvate + H2O = pseudaminate + phosphate. Catalyzes the fifth step in the biosynthesis of pseudaminic acid, a sialic-acid-like sugar that is used to modify flagellin. Catalyzes the condensation of phosphoenolpyruvate with 2,4-diacetamido-2,4,6-trideoxy-beta-l-altropyranose, forming pseudaminic acid. This is Pseudaminic acid synthase (pseI) from Helicobacter pylori (strain ATCC 700392 / 26695) (Campylobacter pylori).